We begin with the raw amino-acid sequence, 73 residues long: Translation initiation factor IF-1 (73 aa).

The S1-like domain occupies 1-73 (MAKKEDTIVL…TKARVVYRHR (73 aa)).

The protein belongs to the IF-1 family. In terms of assembly, component of the 30S ribosomal translation pre-initiation complex which assembles on the 30S ribosome in the order IF-2 and IF-3, IF-1 and N-formylmethionyl-tRNA(fMet); mRNA recruitment can occur at any time during PIC assembly.

The protein localises to the cytoplasm. In terms of biological role, one of the essential components for the initiation of protein synthesis. Stabilizes the binding of IF-2 and IF-3 on the 30S subunit to which N-formylmethionyl-tRNA(fMet) subsequently binds. Helps modulate mRNA selection, yielding the 30S pre-initiation complex (PIC). Upon addition of the 50S ribosomal subunit IF-1, IF-2 and IF-3 are released leaving the mature 70S translation initiation complex. The sequence is that of Translation initiation factor IF-1 from Chlamydia caviae (strain ATCC VR-813 / DSM 19441 / 03DC25 / GPIC) (Chlamydophila caviae).